The following is a 309-amino-acid chain: NAD-dependent protein deacylase sirtuin-5A, mitochondrial (309 aa).

The transit peptide at 1-35 (MILLTFHTRRLVSHAYCGLKPASQKKSIALEMTRP) directs the protein to the mitochondrion. Positions 36–306 (SSNLADFREA…PPALARHETE (271 aa)) constitute a Deacetylase sirtuin-type domain. NAD(+) is bound at residue 57 to 76 (GAGVSAESGVPTFRGAGGYW). Residues tyrosine 101 and arginine 104 each contribute to the substrate site. NAD(+) is bound at residue 139–142 (QNID). Catalysis depends on histidine 157, which acts as the Proton acceptor. Zn(2+) is bound by residues cysteine 165, cysteine 168, cysteine 206, and cysteine 211. NAD(+) is bound by residues 248–250 (GTS), 274–276 (NME), and cysteine 292.

Belongs to the sirtuin family. Class III subfamily. Requires Zn(2+) as cofactor.

It localises to the mitochondrion. The protein resides in the cytoplasm. The protein localises to the cytosol. It is found in the nucleus. It catalyses the reaction N(6)-malonyl-L-lysyl-[protein] + NAD(+) + H2O = 2''-O-malonyl-ADP-D-ribose + nicotinamide + L-lysyl-[protein]. The catalysed reaction is N(6)-succinyl-L-lysyl-[protein] + NAD(+) + H2O = 2''-O-succinyl-ADP-D-ribose + nicotinamide + L-lysyl-[protein]. It carries out the reaction N(6)-glutaryl-L-lysyl-[protein] + NAD(+) + H2O = 2''-O-glutaryl-ADP-D-ribose + nicotinamide + L-lysyl-[protein]. In terms of biological role, NAD-dependent lysine demalonylase, desuccinylase and deglutarylase that specifically removes malonyl, succinyl and glutaryl groups on target proteins. Has weak NAD-dependent protein deacetylase activity; however this activity may not be physiologically relevant in vivo. The protein is NAD-dependent protein deacylase sirtuin-5A, mitochondrial (sirt5-a) of Xenopus laevis (African clawed frog).